The following is a 523-amino-acid chain: (R)-citramalate synthase (523 aa).

Positions 6 to 272 (VEVLDTTLRD…KGNESLKKLK (267 aa)) constitute a Pyruvate carboxyltransferase domain.

It belongs to the alpha-IPM synthase/homocitrate synthase family.

It carries out the reaction pyruvate + acetyl-CoA + H2O = (3R)-citramalate + CoA + H(+). Its pathway is amino-acid biosynthesis; L-isoleucine biosynthesis; 2-oxobutanoate from pyruvate: step 1/3. Its activity is regulated as follows. Inhibited by isoleucine. In terms of biological role, catalyzes the condensation of pyruvate and acetyl-coenzyme A to form (R)-citramalate. Makes part of a pathway for isoleucine biosynthesis, i.e. the citramalate-dependent pathway. Also displays a low alpha-isopropylmalate synthase activity, using 2-oxoisovalerate as substrate, but is unable to use 2-oxoglutarate. This chain is (R)-citramalate synthase, found in Sulfolobus acidocaldarius (strain ATCC 33909 / DSM 639 / JCM 8929 / NBRC 15157 / NCIMB 11770).